The chain runs to 332 residues: UDP-N-acetylenolpyruvoylglucosamine reductase (332 aa).

The region spanning 55 to 221 (VGGAADLYVA…TQATLQLAPG (167 aa)) is the FAD-binding PCMH-type domain. Arginine 200 is a catalytic residue. Residue serine 251 is the Proton donor of the active site. Glutamate 321 is an active-site residue.

The protein belongs to the MurB family. FAD is required as a cofactor.

The protein localises to the cytoplasm. It catalyses the reaction UDP-N-acetyl-alpha-D-muramate + NADP(+) = UDP-N-acetyl-3-O-(1-carboxyvinyl)-alpha-D-glucosamine + NADPH + H(+). Its pathway is cell wall biogenesis; peptidoglycan biosynthesis. Cell wall formation. The chain is UDP-N-acetylenolpyruvoylglucosamine reductase from Nostoc punctiforme (strain ATCC 29133 / PCC 73102).